A 429-amino-acid chain; its full sequence is Glutamyl-tRNA reductase (429 aa).

Residues Thr52–Arg55, Ser110, Glu115–Gln117, and Gln121 each bind substrate. The Nucleophile role is filled by Cys53. NADP(+) is bound at residue Gly190–Ile195.

The protein belongs to the glutamyl-tRNA reductase family. In terms of assembly, homodimer.

The enzyme catalyses (S)-4-amino-5-oxopentanoate + tRNA(Glu) + NADP(+) = L-glutamyl-tRNA(Glu) + NADPH + H(+). Its pathway is porphyrin-containing compound metabolism; protoporphyrin-IX biosynthesis; 5-aminolevulinate from L-glutamyl-tRNA(Glu): step 1/2. In terms of biological role, catalyzes the NADPH-dependent reduction of glutamyl-tRNA(Glu) to glutamate 1-semialdehyde (GSA). The polypeptide is Glutamyl-tRNA reductase (Verminephrobacter eiseniae (strain EF01-2)).